A 517-amino-acid chain; its full sequence is MYLNGRITRIFRLKKNSFRQQNFLYPLLLQEYIYSLAHYNSFNSLISYEPVEIIGYDNKSSLVLVKRLITRMYQQKSLISSLNDSNQNEFWGHKNSFSSHFSSQMVSEGFGVILEIPFLSRLVSSLEEKRIPKYQNLRSIHSIFPFLEDKLSHLNYVSDLLIPHPIHLEILVQILQCWIKDVPSLHLLRLFFHEYHNLNSLITSKKAIDVFSKRKKRFFWFLHNSYVYECEYLFLFLRKQSSYLRSISSGVFLERTQFYGKIEYLIIRCCNSFQKILWVLKDTFIHYVRYQGKAILASERTLILMNGWKFHLVNFWQSYFHFWVQPYRIHINQLPNYSFSFLGYFSSVRKNPLVVRNQMLENSFLINTLNNKLDTIVPAISLIGSLSKAQFCTVLGHLISKPIWTDLSDSAIRDRFCRICRNLCRYHTGSSKKQVLDRIKYILRLSCARTLARKHKSTVRTFMRRLGSGFLKEFFLEEEQSPSLIFLQKISFILHGLHRERIWYLDIIRINDLVDHS.

Belongs to the intron maturase 2 family. MatK subfamily.

It localises to the plastid. Its subcellular location is the chloroplast. In terms of biological role, usually encoded in the trnK tRNA gene intron. Probably assists in splicing its own and other chloroplast group II introns. The chain is Maturase K from Dracula chimaera.